Reading from the N-terminus, the 328-residue chain is Reticulocalbin-3 (328 aa).

Positions 1–20 are cleaved as a signal peptide; it reads MMWRWSFLLLLLLLRHWALG. The tract at residues 24–48 is disordered; the sequence is PDAGPHGQDRVHHGTPLSEAPHDDA. EF-hand domains follow at residues 77–112, 113–148, 163–198, 200–235, 241–276, and 277–312; these read QARL…TQQR, HIRD…HYEP, KMLA…EEFP, MRDI…EEPG, WVQT…PSQD, and QPLV…FVGS. Ca(2+) contacts are provided by aspartate 92, aspartate 94, tryptophan 96, glutamate 101, aspartate 126, aspartate 128, aspartate 130, arginine 132, and glutamate 137. The N-linked (GlcNAc...) asparagine glycan is linked to asparagine 140. Aspartate 176, aspartate 178, aspartate 180, methionine 182, glutamate 187, aspartate 213, asparagine 215, aspartate 217, tyrosine 219, glutamate 224, aspartate 254, asparagine 256, aspartate 258, arginine 260, glutamate 265, aspartate 290, aspartate 292, aspartate 294, arginine 296, and glutamate 301 together coordinate Ca(2+). Positions 325–328 match the Prevents secretion from ER motif; sequence HDEL.

It belongs to the CREC family. As to quaternary structure, interacts with PCSK6 (immature form including the propeptide); probably involved in the maturation and the secretion of PCSK6. In terms of processing, degraded by PCSK6 and other endoproteases including FURIN and PCSK5. N-glycosylated. As to expression, highly expressed in lung and heart. Also detected in liver, spleen, kidney, skeletal muscle, intestine, stomach, and brain.

The protein localises to the endoplasmic reticulum lumen. Probable molecular chaperone assisting protein biosynthesis and transport in the endoplasmic reticulum. Required for the proper biosynthesis and transport of pulmonary surfactant-associated protein A/SP-A, pulmonary surfactant-associated protein D/SP-D and the lipid transporter ABCA3. By regulating both the proper expression and the degradation through the endoplasmic reticulum-associated protein degradation pathway of these proteins plays a crucial role in pulmonary surfactant homeostasis. Has an anti-fibrotic activity by negatively regulating the secretion of type I and type III collagens. This calcium-binding protein also transiently associates with immature PCSK6 and regulates its secretion. In Mus musculus (Mouse), this protein is Reticulocalbin-3.